Reading from the N-terminus, the 256-residue chain is Ubiquinone/menaquinone biosynthesis C-methyltransferase UbiE (256 aa).

Positions 1-12 (MNDQRKGEHAEP) are enriched in basic and acidic residues. Positions 1–21 (MNDQRKGEHAEPTTHFGYQDV) are disordered. S-adenosyl-L-methionine contacts are provided by residues Thr79, Asp100, and 128 to 129 (DA).

The protein belongs to the class I-like SAM-binding methyltransferase superfamily. MenG/UbiE family.

The enzyme catalyses a 2-demethylmenaquinol + S-adenosyl-L-methionine = a menaquinol + S-adenosyl-L-homocysteine + H(+). It catalyses the reaction a 2-methoxy-6-(all-trans-polyprenyl)benzene-1,4-diol + S-adenosyl-L-methionine = a 5-methoxy-2-methyl-3-(all-trans-polyprenyl)benzene-1,4-diol + S-adenosyl-L-homocysteine + H(+). The protein operates within quinol/quinone metabolism; menaquinone biosynthesis; menaquinol from 1,4-dihydroxy-2-naphthoate: step 2/2. Its pathway is cofactor biosynthesis; ubiquinone biosynthesis. Its function is as follows. Methyltransferase required for the conversion of demethylmenaquinol (DMKH2) to menaquinol (MKH2) and the conversion of 2-polyprenyl-6-methoxy-1,4-benzoquinol (DDMQH2) to 2-polyprenyl-3-methyl-6-methoxy-1,4-benzoquinol (DMQH2). The chain is Ubiquinone/menaquinone biosynthesis C-methyltransferase UbiE from Pseudomonas putida (strain W619).